Consider the following 869-residue polypeptide: Mismatch repair endonuclease PMS2 (869 aa).

ATP is bound by residues asparagine 44, aspartate 69, glutamate 108, alanine 109, and leucine 110. The short motif at arginine 585–lysine 588 is the Nuclear localization signal element.

This sequence belongs to the DNA mismatch repair MutL/HexB family.

The protein localises to the nucleus. The enzyme catalyses ATP + H2O = ADP + phosphate + H(+). Functionally, component of the post-replicative DNA mismatch repair system (MMR). Involved in B cell growth by positively regulating B cell proliferation and controlling replication efficiency. Controls cell cycle to prevent re-replication and defects in DNA damage-induced G2 checkpoint. Doesn't seem to counteract or control the immunoglobulin gene conversion (Ig GC) and to contribute to guanine/uracil mismatch repair. Possesses an ATPase activity, but in the absence of gross structural changes, ATP hydrolysis may not be necessary for proficient mismatch repair. The chain is Mismatch repair endonuclease PMS2 from Gallus gallus (Chicken).